Here is a 430-residue protein sequence, read N- to C-terminus: Aspartate aminotransferase, mitochondrial (430 aa).

The transit peptide at 1–28 (MALAMMIRNAASKRGMTPISGHFGGLRS) directs the protein to the mitochondrion. L-aspartate is bound by residues Gly65, Trp160, and Asn213. Lys277 bears the N6-(pyridoxal phosphate)lysine mark. Residue Arg405 coordinates L-aspartate.

The protein belongs to the class-I pyridoxal-phosphate-dependent aminotransferase family. Homodimer. Pyridoxal 5'-phosphate is required as a cofactor.

The protein localises to the mitochondrion matrix. The enzyme catalyses L-aspartate + 2-oxoglutarate = oxaloacetate + L-glutamate. Its function is as follows. Amino acid aminotransferase important for the metabolism of amino acids and Krebs-cycle related organic acids. No activity with D-Asp or D-Ala as amino donors. In plants, it is involved in nitrogen metabolism and in aspects of carbon and energy metabolism. The chain is Aspartate aminotransferase, mitochondrial (ASP1) from Arabidopsis thaliana (Mouse-ear cress).